The sequence spans 190 residues: Threonylcarbamoyl-AMP synthase (190 aa).

Residues 9–190 form the YrdC-like domain; it reads FLQLALARQT…IDIVTGQQFR (182 aa).

The protein belongs to the SUA5 family. TsaC subfamily.

The protein localises to the cytoplasm. The enzyme catalyses L-threonine + hydrogencarbonate + ATP = L-threonylcarbamoyladenylate + diphosphate + H2O. Its function is as follows. Required for the formation of a threonylcarbamoyl group on adenosine at position 37 (t(6)A37) in tRNAs that read codons beginning with adenine. Catalyzes the conversion of L-threonine, HCO(3)(-)/CO(2) and ATP to give threonylcarbamoyl-AMP (TC-AMP) as the acyladenylate intermediate, with the release of diphosphate. This chain is Threonylcarbamoyl-AMP synthase, found in Marinobacter nauticus (strain ATCC 700491 / DSM 11845 / VT8) (Marinobacter aquaeolei).